A 392-amino-acid polypeptide reads, in one-letter code: Formate-dependent phosphoribosylglycinamide formyltransferase (392 aa).

Residues 15 to 16 and Glu75 each bind N(1)-(5-phospho-beta-D-ribosyl)glycinamide; that span reads EL. Residues Arg107, Lys148, 153-158, 188-191, and Glu196 contribute to the ATP site; these read SSGKGQ and EEFL. An ATP-grasp domain is found at 112–302; the sequence is DLAAGELNLR…EFELHLRAVL (191 aa). Positions 261 and 273 each coordinate Mg(2+). N(1)-(5-phospho-beta-D-ribosyl)glycinamide-binding positions include Asp280, Lys350, and 357–358; that span reads RR.

This sequence belongs to the PurK/PurT family. In terms of assembly, homodimer.

The catalysed reaction is N(1)-(5-phospho-beta-D-ribosyl)glycinamide + formate + ATP = N(2)-formyl-N(1)-(5-phospho-beta-D-ribosyl)glycinamide + ADP + phosphate + H(+). Its pathway is purine metabolism; IMP biosynthesis via de novo pathway; N(2)-formyl-N(1)-(5-phospho-D-ribosyl)glycinamide from N(1)-(5-phospho-D-ribosyl)glycinamide (formate route): step 1/1. Involved in the de novo purine biosynthesis. Catalyzes the transfer of formate to 5-phospho-ribosyl-glycinamide (GAR), producing 5-phospho-ribosyl-N-formylglycinamide (FGAR). Formate is provided by PurU via hydrolysis of 10-formyl-tetrahydrofolate. The polypeptide is Formate-dependent phosphoribosylglycinamide formyltransferase (Synechococcus sp. (strain CC9605)).